Consider the following 259-residue polypeptide: Archaerhodopsin-2 (259 aa).

Residues 1-6 constitute a propeptide that is removed on maturation; it reads MDPIAL. Gln-7 is subject to Pyrrolidone carboxylic acid. Topologically, residues 7–18 are extracellular; that stretch reads QAGFDLLNDGRP. The chain crosses the membrane as a helical span at residues 19-40; the sequence is ETLWLGIGTLLMLIGTFYFIAR. Residues 41–49 lie on the Cytoplasmic side of the membrane; it reads GWGVTDKEA. The chain crosses the membrane as a helical span at residues 50-71; sequence REYYAITILVPGIASAAYLAMF. Over 72-90 the chain is Extracellular; it reads FGIGVTEVELASGTVLDIY. A helical membrane pass occupies residues 91-112; the sequence is YARYADWLFTTPLLLLDLALLA. The Cytoplasmic segment spans residues 113 to 115; the sequence is KVD. A helical transmembrane segment spans residues 116–138; the sequence is RVTIGTLIGVDALMIVTGLIGAL. Over 139 to 142 the chain is Extracellular; it reads SKTP. The helical transmembrane segment at 143–171 threads the bilayer; it reads LARYTWWLFSTIAFLFVLYYLLTSLRSAA. The Cytoplasmic segment spans residues 172-174; sequence AKR. A helical transmembrane segment spans residues 175–203; it reads SEEVRSTFNTLTALVAVLWTAYPILWIVG. Residues 204-211 lie on the Extracellular side of the membrane; the sequence is TEGAGVVG. A helical membrane pass occupies residues 212–244; sequence LGIETLAFMVLDVTAKVGFGFVLLRSRAILGET. At Lys-227 the chain carries N6-(retinylidene)lysine. Over 245–259 the chain is Cytoplasmic; that stretch reads EAPEPSAGADASAAD.

It belongs to the archaeal/bacterial/fungal opsin family.

It localises to the cell membrane. Functionally, light-driven proton pump. It may interact with bacterioruberin in the claret membrane. This chain is Archaerhodopsin-2, found in Halobacterium sp. (strain aus-2).